The chain runs to 270 residues: Putative pyruvate, phosphate dikinase regulatory protein 2 (270 aa).

Residue 151-158 coordinates ADP; it reads GVSRTSKT.

The protein belongs to the pyruvate, phosphate/water dikinase regulatory protein family. PDRP subfamily.

It catalyses the reaction N(tele)-phospho-L-histidyl/L-threonyl-[pyruvate, phosphate dikinase] + ADP = N(tele)-phospho-L-histidyl/O-phospho-L-threonyl-[pyruvate, phosphate dikinase] + AMP + H(+). The catalysed reaction is N(tele)-phospho-L-histidyl/O-phospho-L-threonyl-[pyruvate, phosphate dikinase] + phosphate + H(+) = N(tele)-phospho-L-histidyl/L-threonyl-[pyruvate, phosphate dikinase] + diphosphate. Its function is as follows. Bifunctional serine/threonine kinase and phosphorylase involved in the regulation of the pyruvate, phosphate dikinase (PPDK) by catalyzing its phosphorylation/dephosphorylation. The polypeptide is Putative pyruvate, phosphate dikinase regulatory protein 2 (Listeria welshimeri serovar 6b (strain ATCC 35897 / DSM 20650 / CCUG 15529 / CIP 8149 / NCTC 11857 / SLCC 5334 / V8)).